Here is a 94-residue protein sequence, read N- to C-terminus: Small ubiquitin-related modifier 3 (94 aa).

K11 participates in a covalent cross-link: Glycyl lysine isopeptide (Lys-Gly) (interchain with G-Cter in SUMO). Residues 15–92 form the Ubiquitin-like domain; sequence DHINLKVAGQ…IDVFQQQTGG (78 aa). A Glycyl lysine isopeptide (Gly-Lys) (interchain with K-? in acceptor proteins) cross-link involves residue G92. The propeptide occupies 93–94; the sequence is VC.

The protein belongs to the ubiquitin family. SUMO subfamily. In terms of assembly, interacts with sae2 and ube2i. Covalently attached to a number of proteins. Polymeric chains can be formed through Lys-11 cross-linking. Post-translationally, cleavage of precursor form by a sentrin-specific protease is necessary for function.

It is found in the cytoplasm. It localises to the nucleus. The protein localises to the PML body. Ubiquitin-like protein which can be covalently attached to target lysines either as a monomer or as a lysine-linked polymer. Does not seem to be involved in protein degradation and may function as an antagonist of ubiquitin in the degradation process. Plays a role in a number of cellular processes such as nuclear transport, DNA replication and repair, mitosis and signal transduction. Covalent attachment to its substrates requires prior activation by the E1 complex sae1-sae2 and linkage to the E2 enzyme ube2i. This is Small ubiquitin-related modifier 3 (sumo3) from Xenopus laevis (African clawed frog).